The following is a 426-amino-acid chain: tRNA(Ile)-lysidine synthase (426 aa).

27–32 (SGGADS) lines the ATP pocket.

This sequence belongs to the tRNA(Ile)-lysidine synthase family.

It localises to the cytoplasm. It catalyses the reaction cytidine(34) in tRNA(Ile2) + L-lysine + ATP = lysidine(34) in tRNA(Ile2) + AMP + diphosphate + H(+). Functionally, ligates lysine onto the cytidine present at position 34 of the AUA codon-specific tRNA(Ile) that contains the anticodon CAU, in an ATP-dependent manner. Cytidine is converted to lysidine, thus changing the amino acid specificity of the tRNA from methionine to isoleucine. In Bacteroides thetaiotaomicron (strain ATCC 29148 / DSM 2079 / JCM 5827 / CCUG 10774 / NCTC 10582 / VPI-5482 / E50), this protein is tRNA(Ile)-lysidine synthase.